Reading from the N-terminus, the 331-residue chain is 2-isopropylmalate synthase (331 aa).

One can recognise a Pyruvate carboxyltransferase domain in the interval 1–80 (RDEVVRGRDV…YTRINTREIY (80 aa)). Mn(2+)-binding residues include His-15, His-17, and Asn-51. The interval 205 to 331 (QLEHVQFFSG…PSIEEVHRGV (127 aa)) is regulatory domain.

The protein belongs to the alpha-IPM synthase/homocitrate synthase family. LeuA type 1 subfamily. Homotetramer. Mn(2+) serves as cofactor.

The protein localises to the cytoplasm. It catalyses the reaction 3-methyl-2-oxobutanoate + acetyl-CoA + H2O = (2S)-2-isopropylmalate + CoA + H(+). It functions in the pathway amino-acid biosynthesis; L-leucine biosynthesis; L-leucine from 3-methyl-2-oxobutanoate: step 1/4. Its function is as follows. Catalyzes the condensation of the acetyl group of acetyl-CoA with 3-methyl-2-oxobutanoate (2-oxoisovalerate) to form 3-carboxy-3-hydroxy-4-methylpentanoate (2-isopropylmalate). This Thermus thermophilus protein is 2-isopropylmalate synthase.